A 407-amino-acid chain; its full sequence is Serine/threonine transporter SstT (407 aa).

Helical transmembrane passes span 14–34 (GSLVLQILVGIVAGVILATVS), 48–68 (FVGALKAIAPILVFILVAASI), 82–102 (IVILYLFGTFSAAVTAVLMSF), 141–161 (AVLTGNYIGILAWGVGLGLAL), 192–212 (IGIFGLVSATFATTGFTAIAG), 216–236 (LLLVLLAAMAIMALIINPAIV), 290–310 (IPLGATINMGGAAITITILTL), 316–336 (MGIQVDLLTAILLSVVAGVSA), and 363–383 (VAMQVVAVGFIIGVIQDSAET).

Belongs to the dicarboxylate/amino acid:cation symporter (DAACS) (TC 2.A.23) family.

It localises to the cell inner membrane. It carries out the reaction L-serine(in) + Na(+)(in) = L-serine(out) + Na(+)(out). It catalyses the reaction L-threonine(in) + Na(+)(in) = L-threonine(out) + Na(+)(out). Involved in the import of serine and threonine into the cell, with the concomitant import of sodium (symport system). This chain is Serine/threonine transporter SstT, found in Shewanella halifaxensis (strain HAW-EB4).